The sequence spans 672 residues: DNA ligase (672 aa).

Residues 37 to 41 (DAEYD), 86 to 87 (SL), and glutamate 115 each bind NAD(+). The N6-AMP-lysine intermediate role is filled by lysine 117. NAD(+) is bound by residues arginine 138, glutamate 172, lysine 288, and lysine 312. Zn(2+) contacts are provided by cysteine 406, cysteine 409, cysteine 424, and cysteine 429. Residues 590–672 (DISSTFAGKT…LQEIQQSKQV (83 aa)) form the BRCT domain.

The protein belongs to the NAD-dependent DNA ligase family. LigA subfamily. Requires Mg(2+) as cofactor. Mn(2+) serves as cofactor.

The catalysed reaction is NAD(+) + (deoxyribonucleotide)n-3'-hydroxyl + 5'-phospho-(deoxyribonucleotide)m = (deoxyribonucleotide)n+m + AMP + beta-nicotinamide D-nucleotide.. In terms of biological role, DNA ligase that catalyzes the formation of phosphodiester linkages between 5'-phosphoryl and 3'-hydroxyl groups in double-stranded DNA using NAD as a coenzyme and as the energy source for the reaction. It is essential for DNA replication and repair of damaged DNA. The polypeptide is DNA ligase (Anoxybacillus flavithermus (strain DSM 21510 / WK1)).